Reading from the N-terminus, the 158-residue chain is Small ribosomal subunit protein uS7 (158 aa).

The protein belongs to the universal ribosomal protein uS7 family. Part of the 30S ribosomal subunit. Contacts proteins S9 and S11.

Functionally, one of the primary rRNA binding proteins, it binds directly to 16S rRNA where it nucleates assembly of the head domain of the 30S subunit. Is located at the subunit interface close to the decoding center, probably blocks exit of the E-site tRNA. In Granulibacter bethesdensis (strain ATCC BAA-1260 / CGDNIH1), this protein is Small ribosomal subunit protein uS7.